The chain runs to 273 residues: Undecaprenyl-diphosphatase (273 aa).

8 helical membrane passes run 4–24 (MELW…FAPV), 48–68 (AANT…VVVF), 89–109 (LNLI…VLFE), 116–136 (LFST…MIAA), 152–172 (ITYK…WPGF), 193–213 (ADFT…LSLL), 222–242 (ADIP…LLAI), and 252–272 (IRLV…YFLY).

It belongs to the UppP family.

It is found in the cell membrane. The enzyme catalyses di-trans,octa-cis-undecaprenyl diphosphate + H2O = di-trans,octa-cis-undecaprenyl phosphate + phosphate + H(+). In terms of biological role, catalyzes the dephosphorylation of undecaprenyl diphosphate (UPP). Confers resistance to bacitracin. The protein is Undecaprenyl-diphosphatase of Geobacillus kaustophilus (strain HTA426).